A 397-amino-acid chain; its full sequence is Chorismate synthase (397 aa).

NADP(+)-binding residues include Arg-40 and Arg-46. FMN-binding positions include 129–131, 257–258, Gly-302, 317–321, and Arg-343; these read RSS, QA, and KPISS.

This sequence belongs to the chorismate synthase family. In terms of assembly, homotetramer. FMNH2 serves as cofactor.

The catalysed reaction is 5-O-(1-carboxyvinyl)-3-phosphoshikimate = chorismate + phosphate. It participates in metabolic intermediate biosynthesis; chorismate biosynthesis; chorismate from D-erythrose 4-phosphate and phosphoenolpyruvate: step 7/7. Functionally, catalyzes the anti-1,4-elimination of the C-3 phosphate and the C-6 proR hydrogen from 5-enolpyruvylshikimate-3-phosphate (EPSP) to yield chorismate, which is the branch point compound that serves as the starting substrate for the three terminal pathways of aromatic amino acid biosynthesis. This reaction introduces a second double bond into the aromatic ring system. The protein is Chorismate synthase of Chlorobium limicola (strain DSM 245 / NBRC 103803 / 6330).